Here is a 344-residue protein sequence, read N- to C-terminus: Uroporphyrinogen decarboxylase (344 aa).

Substrate-binding positions include 24–28 (RQAGR), phenylalanine 43, aspartate 74, tyrosine 149, serine 204, and histidine 319.

It belongs to the uroporphyrinogen decarboxylase family. As to quaternary structure, homodimer.

It localises to the cytoplasm. The enzyme catalyses uroporphyrinogen III + 4 H(+) = coproporphyrinogen III + 4 CO2. It participates in porphyrin-containing compound metabolism; protoporphyrin-IX biosynthesis; coproporphyrinogen-III from 5-aminolevulinate: step 4/4. In terms of biological role, catalyzes the decarboxylation of four acetate groups of uroporphyrinogen-III to yield coproporphyrinogen-III. In Agrobacterium fabrum (strain C58 / ATCC 33970) (Agrobacterium tumefaciens (strain C58)), this protein is Uroporphyrinogen decarboxylase.